Here is a 2849-residue protein sequence, read N- to C-terminus: Immunoglobulin-like and fibronectin type III domain-containing protein 1 (2849 aa).

Residues 82 to 108 form a disordered region; sequence AGSAARPDGSGSESLAASSSWKPRRRL. Positions 90 to 101 are enriched in low complexity; that stretch reads GSGSESLAASSS. In terms of domain architecture, Ig-like 1 spans 187-277; that stretch reads PDFKQKPVTL…GEATCSVRLT (91 aa). A coiled-coil region spans residues 347-380; that stretch reads IVDFRGMLRKLQEMKKEQEDRMAQYVSAIANLRH. One can recognise an Ig-like 2 domain in the interval 468–557; the sequence is PRVVVPLAET…SSAWLVVEGG (90 aa). 12 disordered regions span residues 577–600, 652–760, 864–924, 962–981, 1061–1103, 1221–1258, 1312–1338, 1350–1384, 1498–1523, 1654–1675, 1724–1780, and 1827–2055; these read LASE…RGSL, VTLP…AGQR, YPGQ…DLRS, VGQR…IGPQ, EEEF…EGMA, TVGS…SSWG, STVG…SEGH, RDGS…PDGE, ETGR…MGSE, EWKD…SEEI, QQGV…ATSH, and GAAG…SMDH. Positions 717 to 742 are enriched in basic and acidic residues; it reads HPRDRRLESRGEGQEHSEGHGSELDR. Over residues 866-880 the composition is skewed to polar residues; that stretch reads GQTSEGNDTQKSSLS. Gly residues predominate over residues 1070 to 1084; it reads RSQGKGSRGGMGLGG. Positions 1873-1882 are enriched in polar residues; the sequence is SKPQEPQNEL. Basic and acidic residues-rich tracts occupy residues 1988–2004 and 2012–2021; these read SEDR…DRRQ and SRRDTQEGRS. The Ig-like 3 domain occupies 2034–2137; it reads PRSRYQPGTG…GCQHSEASLT (104 aa). Fibronectin type-III domains follow at residues 2244 to 2339, 2344 to 2443, and 2445 to 2540; these read PPQG…VAPE, PPSA…MRPP, and PVRD…AMPA. One can recognise an Ig-like 4 domain in the interval 2544 to 2628; the sequence is PRFLMDSGTK…LRNLQGKEAT (85 aa). In terms of domain architecture, Fibronectin type-III 4 spans 2641 to 2735; it reads APGSIYLQEN…TSQPWCIPRQ (95 aa). Residues 2749–2845 enclose the Ig-like 5 domain; it reads PDLSQKPRFL…AVSTATLIVT (97 aa).

Interacts with FLNC. Interacts with KY. Isoform 1, isoform 3 and isoform 4 are expressed in skeletal muscle while isoform 2 is detected in both skeletal muscle and heart (at protein level).

It is found in the nucleus. The protein localises to the cytoplasm. The protein resides in the myofibril. It localises to the sarcomere. Its subcellular location is the z line. The sequence is that of Immunoglobulin-like and fibronectin type III domain-containing protein 1 (Igfn1) from Mus musculus (Mouse).